We begin with the raw amino-acid sequence, 290 residues long: Nucleoid occlusion protein (290 aa).

Residues 153-172 (EALAQRLGKGQSTIANKLRL) constitute a DNA-binding region (H-T-H motif).

This sequence belongs to the ParB family.

The protein resides in the cytoplasm. It is found in the nucleoid. Its function is as follows. Effects nucleoid occlusion by binding relatively nonspecifically to DNA and preventing the assembly of the division machinery in the vicinity of the nucleoid, especially under conditions that disturb the cell cycle. It helps to coordinate cell division and chromosome segregation by preventing the formation of the Z ring through the nucleoid, which would cause chromosome breakage. This chain is Nucleoid occlusion protein, found in Bacillus cytotoxicus (strain DSM 22905 / CIP 110041 / 391-98 / NVH 391-98).